Reading from the N-terminus, the 368-residue chain is Spermidine/putrescine import ATP-binding protein PotA (368 aa).

An ABC transporter domain is found at 6–236 (VSIKNVSKFF…PVNVFAATFI (231 aa)). 38 to 45 (GPSGCGKT) lines the ATP pocket.

Belongs to the ABC transporter superfamily. Spermidine/putrescine importer (TC 3.A.1.11.1) family. As to quaternary structure, the complex is composed of two ATP-binding proteins (PotA), two transmembrane proteins (PotB and PotC) and a solute-binding protein (PotD).

The protein localises to the cell inner membrane. The catalysed reaction is ATP + H2O + polyamine-[polyamine-binding protein]Side 1 = ADP + phosphate + polyamineSide 2 + [polyamine-binding protein]Side 1.. Its function is as follows. Part of the ABC transporter complex PotABCD involved in spermidine/putrescine import. Responsible for energy coupling to the transport system. The sequence is that of Spermidine/putrescine import ATP-binding protein PotA from Thermotoga maritima (strain ATCC 43589 / DSM 3109 / JCM 10099 / NBRC 100826 / MSB8).